A 450-amino-acid polypeptide reads, in one-letter code: Phosphoglucosamine mutase (450 aa).

The active-site Phosphoserine intermediate is the Ser101. The Mg(2+) site is built by Ser101, Asp240, Asp242, and Asp244. At Ser101 the chain carries Phosphoserine.

The protein belongs to the phosphohexose mutase family. Mg(2+) is required as a cofactor. In terms of processing, activated by phosphorylation.

It carries out the reaction alpha-D-glucosamine 1-phosphate = D-glucosamine 6-phosphate. Its function is as follows. Catalyzes the conversion of glucosamine-6-phosphate to glucosamine-1-phosphate. This chain is Phosphoglucosamine mutase, found in Streptococcus equi subsp. zooepidemicus (strain H70).